Reading from the N-terminus, the 357-residue chain is UDP-N-acetylglucosamine--N-acetylmuramyl-(pentapeptide) pyrophosphoryl-undecaprenol N-acetylglucosamine transferase (357 aa).

UDP-N-acetyl-alpha-D-glucosamine is bound by residues 15–17 (TGG), Asn-124, Arg-165, Ser-194, and Gln-288.

Belongs to the glycosyltransferase 28 family. MurG subfamily.

It is found in the cell inner membrane. The catalysed reaction is di-trans,octa-cis-undecaprenyl diphospho-N-acetyl-alpha-D-muramoyl-L-alanyl-D-glutamyl-meso-2,6-diaminopimeloyl-D-alanyl-D-alanine + UDP-N-acetyl-alpha-D-glucosamine = di-trans,octa-cis-undecaprenyl diphospho-[N-acetyl-alpha-D-glucosaminyl-(1-&gt;4)]-N-acetyl-alpha-D-muramoyl-L-alanyl-D-glutamyl-meso-2,6-diaminopimeloyl-D-alanyl-D-alanine + UDP + H(+). The protein operates within cell wall biogenesis; peptidoglycan biosynthesis. Its function is as follows. Cell wall formation. Catalyzes the transfer of a GlcNAc subunit on undecaprenyl-pyrophosphoryl-MurNAc-pentapeptide (lipid intermediate I) to form undecaprenyl-pyrophosphoryl-MurNAc-(pentapeptide)GlcNAc (lipid intermediate II). The protein is UDP-N-acetylglucosamine--N-acetylmuramyl-(pentapeptide) pyrophosphoryl-undecaprenol N-acetylglucosamine transferase of Nostoc punctiforme (strain ATCC 29133 / PCC 73102).